The primary structure comprises 316 residues: Endochitinase WIN8 (316 aa).

A signal peptide spans 1 to 23 (MRFWALTVLSLLLSLLLGVSSDT). The Chitin-binding type-1 domain maps to 24–64 (AQCGSQAGNATCPNDLCCSSGGYCGLTVAYCCAGCVSQCRN). Intrachain disulfides connect Cys-26–Cys-41, Cys-35–Cys-47, Cys-40–Cys-54, Cys-58–Cys-62, Cys-84–Cys-146, Cys-158–Cys-168, and Cys-266–Cys-298. Glu-128 acts as the Proton donor in catalysis.

This sequence belongs to the glycosyl hydrolase 19 family. Chitinase class I subfamily.

It carries out the reaction Random endo-hydrolysis of N-acetyl-beta-D-glucosaminide (1-&gt;4)-beta-linkages in chitin and chitodextrins.. Functionally, defense against chitin-containing fungal pathogens. This is Endochitinase WIN8 (WIN8) from Populus trichocarpa (Western balsam poplar).